The following is a 292-amino-acid chain: UPF0725 protein At4g28920 (292 aa).

The span at 1–17 (MSENDSSESDIEMDPEE) shows a compositional bias: acidic residues. The interval 1-24 (MSENDSSESDIEMDPEEEKVYRRQ) is disordered.

The protein belongs to the UPF0725 (EMB2204) family.

In Arabidopsis thaliana (Mouse-ear cress), this protein is UPF0725 protein At4g28920.